A 123-amino-acid chain; its full sequence is Probable histone H2B 3 (123 aa).

Residues 1-31 (MAPPKPSAKGAKKAAKTVSKPKDGKKRKHAR) form a disordered region. O-linked (GlcNAc) serine glycosylation occurs at Ser110. A Glycyl lysine isopeptide (Lys-Gly) (interchain with G-Cter in ubiquitin) cross-link involves residue Lys118.

This sequence belongs to the histone H2B family. As to quaternary structure, the nucleosome is a histone octamer containing two molecules each of H2A, H2B, H3 and H4 assembled in one H3-H4 heterotetramer and two H2A-H2B heterodimers. The octamer wraps approximately 147 bp of DNA. In terms of processing, monoubiquitination of Lys-118 gives a specific tag for epigenetic transcriptional activation and is also prerequisite for histone H3 'Lys-4' and 'Lys-79' methylation. GlcNAcylation at Ser-110 promotes monoubiquitination of Lys-118. It fluctuates in response to extracellular glucose, and associates with transcribed genes.

It localises to the nucleus. It is found in the chromosome. Functionally, core component of nucleosome. Nucleosomes wrap and compact DNA into chromatin, limiting DNA accessibility to the cellular machineries which require DNA as a template. Histones thereby play a central role in transcription regulation, DNA repair, DNA replication and chromosomal stability. DNA accessibility is regulated via a complex set of post-translational modifications of histones, also called histone code, and nucleosome remodeling. This chain is Probable histone H2B 3 (his-41), found in Caenorhabditis elegans.